A 449-amino-acid chain; its full sequence is Phosphoglucosamine mutase (449 aa).

Ser-100 (phosphoserine intermediate) is an active-site residue. Mg(2+)-binding residues include Ser-100, Asp-240, Asp-242, and Asp-244. Ser-100 bears the Phosphoserine mark.

The protein belongs to the phosphohexose mutase family. Mg(2+) is required as a cofactor. Activated by phosphorylation.

It catalyses the reaction alpha-D-glucosamine 1-phosphate = D-glucosamine 6-phosphate. Functionally, catalyzes the conversion of glucosamine-6-phosphate to glucosamine-1-phosphate. This chain is Phosphoglucosamine mutase, found in Clostridium novyi (strain NT).